A 1014-amino-acid chain; its full sequence is Probable transport protein MmpL11 (1014 aa).

12 helical membrane-spanning segments follow: residues W13–Q33, V156–N173, I188–A208, T235–M255, G279–I299, A311–A331, A373–G393, T530–I550, V560–W580, V598–L618, A649–A669, and I671–V691. The interval S783–G802 is disordered.

The protein belongs to the resistance-nodulation-cell division (RND) (TC 2.A.6) family. MmpL subfamily.

It is found in the cell membrane. The polypeptide is Probable transport protein MmpL11 (mmpL11) (Mycobacterium leprae (strain TN)).